Here is a 103-residue protein sequence, read N- to C-terminus: Large ribosomal subunit protein bL21 (103 aa).

Belongs to the bacterial ribosomal protein bL21 family. Part of the 50S ribosomal subunit. Contacts protein L20.

This protein binds to 23S rRNA in the presence of protein L20. The sequence is that of Large ribosomal subunit protein bL21 from Vibrio cholerae serotype O1 (strain ATCC 39541 / Classical Ogawa 395 / O395).